The primary structure comprises 660 residues: Bifunctional polymyxin resistance protein ArnA (660 aa).

Residues 1-304 (MKAVVFAYHD…TLGLVAGARL (304 aa)) form a formyltransferase ArnAFT region. Residue His104 is the Proton donor; for formyltransferase activity of the active site. (6R)-10-formyltetrahydrofolate is bound by residues Arg114 and 136 to 140 (VKRAD). A dehydrogenase ArnADH region spans residues 314–660 (RRTRVLILGV…QSVEPGDAEE (347 aa)). Residues Asp347 and 368 to 369 (DI) each bind NAD(+). Residues Ala393, Tyr398, and 432-433 (TS) each bind UDP-alpha-D-glucuronate. The active-site Proton acceptor; for decarboxylase activity is Glu434. Residues Arg460, Asn492, 526–535 (KLIDGGRQKR), and Tyr613 each bind UDP-alpha-D-glucuronate. Arg619 (proton donor; for decarboxylase activity) is an active-site residue.

It in the N-terminal section; belongs to the Fmt family. UDP-L-Ara4N formyltransferase subfamily. The protein in the C-terminal section; belongs to the NAD(P)-dependent epimerase/dehydratase family. UDP-glucuronic acid decarboxylase subfamily. Homohexamer, formed by a dimer of trimers.

It carries out the reaction UDP-alpha-D-glucuronate + NAD(+) = UDP-beta-L-threo-pentopyranos-4-ulose + CO2 + NADH. The catalysed reaction is UDP-4-amino-4-deoxy-beta-L-arabinose + (6R)-10-formyltetrahydrofolate = UDP-4-deoxy-4-formamido-beta-L-arabinose + (6S)-5,6,7,8-tetrahydrofolate + H(+). It functions in the pathway nucleotide-sugar biosynthesis; UDP-4-deoxy-4-formamido-beta-L-arabinose biosynthesis; UDP-4-deoxy-4-formamido-beta-L-arabinose from UDP-alpha-D-glucuronate: step 1/3. Its pathway is nucleotide-sugar biosynthesis; UDP-4-deoxy-4-formamido-beta-L-arabinose biosynthesis; UDP-4-deoxy-4-formamido-beta-L-arabinose from UDP-alpha-D-glucuronate: step 3/3. The protein operates within bacterial outer membrane biogenesis; lipopolysaccharide biosynthesis. Its function is as follows. Bifunctional enzyme that catalyzes the oxidative decarboxylation of UDP-glucuronic acid (UDP-GlcUA) to UDP-4-keto-arabinose (UDP-Ara4O) and the addition of a formyl group to UDP-4-amino-4-deoxy-L-arabinose (UDP-L-Ara4N) to form UDP-L-4-formamido-arabinose (UDP-L-Ara4FN). The modified arabinose is attached to lipid A and is required for resistance to polymyxin and cationic antimicrobial peptides. The chain is Bifunctional polymyxin resistance protein ArnA from Erwinia tasmaniensis (strain DSM 17950 / CFBP 7177 / CIP 109463 / NCPPB 4357 / Et1/99).